The primary structure comprises 323 residues: tRNA(Ile)-lysidine synthase (323 aa).

An ATP-binding site is contributed by S33–S38.

It belongs to the tRNA(Ile)-lysidine synthase family.

Its subcellular location is the cytoplasm. The catalysed reaction is cytidine(34) in tRNA(Ile2) + L-lysine + ATP = lysidine(34) in tRNA(Ile2) + AMP + diphosphate + H(+). Functionally, ligates lysine onto the cytidine present at position 34 of the AUA codon-specific tRNA(Ile) that contains the anticodon CAU, in an ATP-dependent manner. Cytidine is converted to lysidine, thus changing the amino acid specificity of the tRNA from methionine to isoleucine. In Mycobacterium leprae (strain TN), this protein is tRNA(Ile)-lysidine synthase.